Reading from the N-terminus, the 94-residue chain is ESAT-6-like protein EsxI (94 aa).

This sequence belongs to the WXG100 family. ESAT-6 subfamily.

It is found in the secreted. The polypeptide is ESAT-6-like protein EsxI (Mycobacterium tuberculosis (strain CDC 1551 / Oshkosh)).